Reading from the N-terminus, the 334-residue chain is Holliday junction branch migration complex subunit RuvB (334 aa).

A large ATPase domain (RuvB-L) region spans residues 4–184 (ADRLIQPQLQ…FGIPLRLEFY (181 aa)). ATP contacts are provided by residues arginine 24, glycine 65, lysine 68, threonine 69, threonine 70, 131 to 133 (EDY), arginine 174, tyrosine 184, and arginine 221. Residue threonine 69 coordinates Mg(2+). Residues 185-255 (NVKDLSTIVS…VAEHALDLLD (71 aa)) are small ATPAse domain (RuvB-S). The tract at residues 258–334 (GEGFDYMDRK…YLHFGMIKPE (77 aa)) is head domain (RuvB-H). Residues arginine 294, arginine 313, and arginine 318 each contribute to the DNA site.

The protein belongs to the RuvB family. Homohexamer. Forms an RuvA(8)-RuvB(12)-Holliday junction (HJ) complex. HJ DNA is sandwiched between 2 RuvA tetramers; dsDNA enters through RuvA and exits via RuvB. An RuvB hexamer assembles on each DNA strand where it exits the tetramer. Each RuvB hexamer is contacted by two RuvA subunits (via domain III) on 2 adjacent RuvB subunits; this complex drives branch migration. In the full resolvosome a probable DNA-RuvA(4)-RuvB(12)-RuvC(2) complex forms which resolves the HJ.

It is found in the cytoplasm. It carries out the reaction ATP + H2O = ADP + phosphate + H(+). The RuvA-RuvB-RuvC complex processes Holliday junction (HJ) DNA during genetic recombination and DNA repair, while the RuvA-RuvB complex plays an important role in the rescue of blocked DNA replication forks via replication fork reversal (RFR). RuvA specifically binds to HJ cruciform DNA, conferring on it an open structure. The RuvB hexamer acts as an ATP-dependent pump, pulling dsDNA into and through the RuvAB complex. RuvB forms 2 homohexamers on either side of HJ DNA bound by 1 or 2 RuvA tetramers; 4 subunits per hexamer contact DNA at a time. Coordinated motions by a converter formed by DNA-disengaged RuvB subunits stimulates ATP hydrolysis and nucleotide exchange. Immobilization of the converter enables RuvB to convert the ATP-contained energy into a lever motion, pulling 2 nucleotides of DNA out of the RuvA tetramer per ATP hydrolyzed, thus driving DNA branch migration. The RuvB motors rotate together with the DNA substrate, which together with the progressing nucleotide cycle form the mechanistic basis for DNA recombination by continuous HJ branch migration. Branch migration allows RuvC to scan DNA until it finds its consensus sequence, where it cleaves and resolves cruciform DNA. The chain is Holliday junction branch migration complex subunit RuvB from Shewanella sp. (strain MR-7).